Here is a 371-residue protein sequence, read N- to C-terminus: Alanine racemase (371 aa).

Residue K40 is the Proton acceptor; specific for D-alanine of the active site. K40 is subject to N6-(pyridoxal phosphate)lysine. R136 is a binding site for substrate. Y263 functions as the Proton acceptor; specific for L-alanine in the catalytic mechanism. Position 310 (M310) interacts with substrate.

Belongs to the alanine racemase family. Pyridoxal 5'-phosphate serves as cofactor.

It carries out the reaction L-alanine = D-alanine. It functions in the pathway amino-acid biosynthesis; D-alanine biosynthesis; D-alanine from L-alanine: step 1/1. Its function is as follows. Catalyzes the interconversion of L-alanine and D-alanine. May also act on other amino acids. The polypeptide is Alanine racemase (alr) (Streptococcus mutans serotype c (strain ATCC 700610 / UA159)).